Consider the following 473-residue polypeptide: UDP-N-acetylmuramate--L-alanine ligase (473 aa).

Residue 114 to 120 (GTHGKTT) coordinates ATP.

The protein belongs to the MurCDEF family.

The protein resides in the cytoplasm. The enzyme catalyses UDP-N-acetyl-alpha-D-muramate + L-alanine + ATP = UDP-N-acetyl-alpha-D-muramoyl-L-alanine + ADP + phosphate + H(+). Its pathway is cell wall biogenesis; peptidoglycan biosynthesis. Functionally, cell wall formation. The sequence is that of UDP-N-acetylmuramate--L-alanine ligase from Chlorobium luteolum (strain DSM 273 / BCRC 81028 / 2530) (Pelodictyon luteolum).